A 144-amino-acid polypeptide reads, in one-letter code: Large ribosomal subunit protein uL11 (144 aa).

Belongs to the universal ribosomal protein uL11 family. As to quaternary structure, part of the ribosomal stalk of the 50S ribosomal subunit. Interacts with L10 and the large rRNA to form the base of the stalk. L10 forms an elongated spine to which L12 dimers bind in a sequential fashion forming a multimeric L10(L12)X complex. One or more lysine residues are methylated.

Forms part of the ribosomal stalk which helps the ribosome interact with GTP-bound translation factors. The chain is Large ribosomal subunit protein uL11 from Rickettsia bellii (strain OSU 85-389).